A 331-amino-acid polypeptide reads, in one-letter code: Tetraacyldisaccharide 4'-kinase (331 aa).

58–65 lines the ATP pocket; the sequence is TVGGSGKT.

The protein belongs to the LpxK family.

The enzyme catalyses a lipid A disaccharide + ATP = a lipid IVA + ADP + H(+). The protein operates within glycolipid biosynthesis; lipid IV(A) biosynthesis; lipid IV(A) from (3R)-3-hydroxytetradecanoyl-[acyl-carrier-protein] and UDP-N-acetyl-alpha-D-glucosamine: step 6/6. Its function is as follows. Transfers the gamma-phosphate of ATP to the 4'-position of a tetraacyldisaccharide 1-phosphate intermediate (termed DS-1-P) to form tetraacyldisaccharide 1,4'-bis-phosphate (lipid IVA). The protein is Tetraacyldisaccharide 4'-kinase of Shewanella denitrificans (strain OS217 / ATCC BAA-1090 / DSM 15013).